We begin with the raw amino-acid sequence, 610 residues long: MPSGFNAKSFLKNVTSAPGVYRMYDKHQQVIYVGKAKDLKKRLSSYFRVNIANVKTQALVSHIDHIDVTVTHSETDALLLENDYIKQYMPKYNVLLRDDKSYPYILLSGHKHPRLAYHRGPKREKGHYFGPYPNGGAVRESLHLIQKLFPIRQCDDLYYKSRSRPCLQYQLDRCSAPCVGIVSDDEYSEQVKLAGLFLRGKDKQVISQLVAKMETAAIDMEYERAAQYRDQITALRRVAEQQEVSNHKGDMDVIGVDYASGIACFHLLFIRDGKIFGSRSYYPSVPAETEIEEVLSSFLGQFYLNADIQRTIPKEVILSHHFDGITELQASIEHALDKKFELKTQVRGDRANFLRLAMTNASNAVATKLSHKNTVEQRFQLLEEALELNEPIKRMECFDISHTMGESTVASCVVFNREGPHKADYRRYNITGITGGDDYAAMEQAISRRFDKIDNNGKVPDLVFIDGGIGQLRVAQTIVDEKCVNIDHPPLLICVTKGEGRKAGLETFTVGGSEQTFEVASDSPAFHLMLHIRDESHRFAITGHRNKRQKTRNTSTLESIAGVGPKRRKALLQHLGGIQEVKGASVAELTKVPGISLEMAQTIHDALRGG.

Residues 16-94 form the GIY-YIG domain; that stretch reads SAPGVYRMYD…IKQYMPKYNV (79 aa). One can recognise a UVR domain in the interval 203-238; it reads KQVISQLVAKMETAAIDMEYERAAQYRDQITALRRV.

The protein belongs to the UvrC family. As to quaternary structure, interacts with UvrB in an incision complex.

Its subcellular location is the cytoplasm. In terms of biological role, the UvrABC repair system catalyzes the recognition and processing of DNA lesions. UvrC both incises the 5' and 3' sides of the lesion. The N-terminal half is responsible for the 3' incision and the C-terminal half is responsible for the 5' incision. The chain is UvrABC system protein C from Shewanella frigidimarina (strain NCIMB 400).